The primary structure comprises 822 residues: AP-1 complex subunit gamma-1 (822 aa).

Positions 597–628 (EIVQTNGETEPAPLETKPPPSGPQPTSQANDL) are disordered. The GAE domain maps to 702–817 (AGIPSITAYS…QDLAEVNNFP (116 aa)).

This sequence belongs to the adaptor complexes large subunit family. As to quaternary structure, adaptor protein complex 1 (AP-1) is a heterotetramer composed of two large adaptins (gamma-type subunit AP1G1 and beta-type subunit AP1B1), a medium adaptin (mu-type subunit AP1M1 or AP1M2) and a small adaptin (sigma-type subunit AP1S1 or AP1S2 or AP1S3). Interacts (via GAE domain) with RABEP1. Interacts with EPS15. Interacts with SYNRG/gamma-synergin. Interacts (via GAE domain) with AP1AR (via coiled-coil domain). Interacts with CLN3 (via dileucine motif); this interaction facilitates lysosomal targeting. Interacts (via GAE domain) with AFTPH/aftiphilin; the interaction is required to recruit AFTPH/aftiphilin to the perinuclear region of the cell.

It is found in the golgi apparatus. It localises to the cytoplasmic vesicle. The protein localises to the clathrin-coated vesicle membrane. Its subcellular location is the cytoplasm. The protein resides in the perinuclear region. It is found in the clathrin-coated vesicle. It localises to the membrane. The protein localises to the clathrin-coated pit. Subunit of clathrin-associated adaptor protein complex 1 that plays a role in protein sorting in the late-Golgi/trans-Golgi network (TGN) and/or endosomes. The AP complexes mediate both the recruitment of clathrin to membranes and the recognition of sorting signals within the cytosolic tails of transmembrane cargo molecules. In association with AFTPH/aftiphilin in the aftiphilin/p200/gamma-synergin complex, involved in the trafficking of transferrin from early to recycling endosomes, and the membrane trafficking of furin and the lysosomal enzyme cathepsin D between the trans-Golgi network (TGN) and endosomes. The polypeptide is AP-1 complex subunit gamma-1 (AP1G1) (Pongo abelii (Sumatran orangutan)).